The primary structure comprises 352 residues: Methylthioribose-1-phosphate isomerase (352 aa).

Substrate-binding positions include 49 to 51 (RGA), Arg93, and Gln202. Asp243 serves as the catalytic Proton donor. Substrate is bound at residue 253-254 (NK).

The protein belongs to the eIF-2B alpha/beta/delta subunits family. MtnA subfamily.

The enzyme catalyses 5-(methylsulfanyl)-alpha-D-ribose 1-phosphate = 5-(methylsulfanyl)-D-ribulose 1-phosphate. It functions in the pathway amino-acid biosynthesis; L-methionine biosynthesis via salvage pathway; L-methionine from S-methyl-5-thio-alpha-D-ribose 1-phosphate: step 1/6. Its function is as follows. Catalyzes the interconversion of methylthioribose-1-phosphate (MTR-1-P) into methylthioribulose-1-phosphate (MTRu-1-P). The sequence is that of Methylthioribose-1-phosphate isomerase from Magnetococcus marinus (strain ATCC BAA-1437 / JCM 17883 / MC-1).